The chain runs to 1189 residues: Tyrosine-protein phosphatase non-receptor type 14 (1189 aa).

The FERM domain occupies Phe21–Lys306. Residues Ser314, Ser461, Ser486, Ser591, Ser593, Ser594, and Ser646 each carry the phosphoserine modification. The disordered stretch occupies residues Ala744–Pro775. Residues Ser760 to Gly771 are compositionally biased toward polar residues. Residue Ser833 is modified to Phosphoserine. The region spanning Val911–Phe1182 is the Tyrosine-protein phosphatase domain. Cys1123 serves as the catalytic Phosphocysteine intermediate. Substrate-binding positions include Cys1123 to Arg1129 and Gln1167.

The protein belongs to the protein-tyrosine phosphatase family. Non-receptor class subfamily. Interacts with FLT4; the interaction is enhanced by stimulation with VEGFC. Interacts (via PPxY motifs) with YAP1 (via WW domains); this interaction leads to the cytoplasmic sequestration of YAP1 and inhibits its transcriptional coactivator activity. Post-translationally, ubiquitinated by the ECS (Elongin BC-CUL2/5-SOCS-box protein)/LRR1 E3 ligase complex and subsequently targeted to proteasomal degradation. As to expression, thymus; in cells of both hematopoietic and non-hematopoietic origins.

The protein localises to the cytoplasm. It localises to the cytoskeleton. Its subcellular location is the nucleus. The catalysed reaction is O-phospho-L-tyrosyl-[protein] + H2O = L-tyrosyl-[protein] + phosphate. In terms of biological role, protein tyrosine phosphatase which may play a role in the regulation of lymphangiogenesis, cell-cell adhesion, cell-matrix adhesion, cell migration, cell growth and also regulates TGF-beta gene expression, thereby modulating epithelial-mesenchymal transition. Mediates beta-catenin dephosphorylation at adhesion junctions. Acts as a negative regulator of the oncogenic property of YAP, a downstream target of the hippo pathway, in a cell density-dependent manner. May function as a tumor suppressor. In Mus musculus (Mouse), this protein is Tyrosine-protein phosphatase non-receptor type 14 (Ptpn14).